A 153-amino-acid polypeptide reads, in one-letter code: Natriuretic peptides A (153 aa).

An N-terminal signal peptide occupies residues 1–25; the sequence is MGSFSTITASFLLFLACQLLWQTGA. 2 propeptides span residues 26–123 and 93–103; these read NPVY…AAPR and DGGALGRGSWD. The tract at residues 62-104 is disordered; it reads VLSEQNEEAGAALSPLPEVPPWAGEVNPAQRDGGALGRGSWDS. Serine 129 carries the post-translational modification Phosphoserine. A disulfide bridge links cysteine 130 with cysteine 146. An important for degradation of atrial natriuretic peptide by IDE region spans residues 147–151; sequence NSFRY.

The protein belongs to the natriuretic peptide family. As to quaternary structure, homodimer; disulfide-linked antiparallel dimer. In terms of processing, the precursor molecule is proteolytically cleaved by CORIN at Arg-123 to produce the atrial natriuretic peptide. Undergoes further proteolytic cleavage by unknown proteases to give rise to long-acting natriuretic peptide, vessel dilator and kaliuretic peptide. Additional processing gives rise to the auriculin and atriopeptin peptides. In the kidneys, alternative processing by an unknown protease results in the peptide urodilatin. Post-translationally, cleavage by MME initiates degradation of the factor and thereby regulates its activity. Degradation by IDE results in reduced activation of NPR1 (in vitro). During IDE degradation, the resulting products can temporarily stimulate NPR2 to produce cGMP, before the fragments are completely degraded and inactivated by IDE (in vitro). Degraded by IDE. In terms of processing, phosphorylation on Ser-129 decreases vasorelaxant activity.

It localises to the secreted. Its subcellular location is the perikaryon. The protein resides in the cell projection. Hormone that plays a key role in mediating cardio-renal homeostasis, and is involved in vascular remodeling and regulating energy metabolism. Acts by specifically binding and stimulating NPR1 to produce cGMP, which in turn activates effector proteins, such as PRKG1, that drive various biological responses. Regulates vasodilation, natriuresis, diuresis and aldosterone synthesis and is therefore essential for regulating blood pressure, controlling the extracellular fluid volume and maintaining the fluid-electrolyte balance. Also involved in inhibiting cardiac remodeling and cardiac hypertrophy by inducing cardiomyocyte apoptosis and attenuating the growth of cardiomyocytes and fibroblasts. Plays a role in female pregnancy by promoting trophoblast invasion and spiral artery remodeling in uterus, and thus prevents pregnancy-induced hypertension. In adipose tissue, acts in various cGMP- and PKG-dependent pathways to regulate lipid metabolism and energy homeostasis. This includes up-regulating lipid metabolism and mitochondrial oxygen utilization by activating the AMP-activated protein kinase (AMPK), and increasing energy expenditure by acting via MAPK11 to promote the UCP1-dependent thermogenesis of brown adipose tissue. Binds the clearance receptor NPR3 which removes the hormone from circulation. In terms of biological role, may have a role in cardio-renal homeostasis through regulation of natriuresis, diuresis, vasodilation, and inhibiting aldosterone synthesis. In vitro, promotes the production of cGMP and induces vasodilation. May promote natriuresis, at least in part, by enhancing prostaglandin E2 synthesis resulting in the inhibition of renal Na+-K+-ATPase. However reports on the involvement of this peptide in mammal blood volume and blood pressure homeostasis are conflicting; according to a report, in vivo it is not sufficient to activate cGMP and does not inhibit collecting duct transport nor effect diuresis and natriuresis. Appears to bind to specific receptors that are distinct from the receptors bound by atrial natriuretic peptide and vessel dilator. Possibly enhances protein excretion in urine by decreasing proximal tubular protein reabsorption. Functionally, may have a role in cardio-renal homeostasis through regulation of natriuresis, diuresis, and vasodilation. In vitro, promotes the production of cGMP and induces vasodilation. May promote natriuresis, at least in part, by enhancing prostaglandin E2 synthesis resulting in the inhibition of renal Na+-K+-ATPase. However reports on the involvement of this peptide in mammal blood volume and blood pressure homeostasis are conflicting; according to a report it is not sufficient to activate cGMP and does not inhibit collecting duct transport nor effect diuresis and natriuresis. Appears to bind to specific receptors that are distinct from the receptors bound by the atrial natriuretic and long-acting natriuretic peptides. Possibly functions in protein excretion in urine by maintaining the integrity of the proximal tubules and enhancing protein excretion by decreasing proximal tubular protein reabsorption. Its function is as follows. May have a role in cardio-renal homeostasis through regulation of diuresis and inhibiting aldosterone synthesis. In vitro, promotes the production of cGMP and induces vasodilation. May promote natriuresis, at least in part, by enhancing prostaglandin E2 synthesis resulting in the inhibition of renal Na+-K+-ATPase. May have a role in potassium excretion but not sodium excretion (natriuresis). Possibly enhances protein excretion in urine by decreasing proximal tubular protein reabsorption. Hormone produced in the kidneys that appears to be important for maintaining cardio-renal homeostasis. Mediates vasodilation, natriuresis and diuresis primarily in the renal system, in order to maintain the extracellular fluid volume and control the fluid-electrolyte balance. Specifically binds and stimulates cGMP production by renal transmembrane receptors, likely NPR1. Urodilatin not ANP, may be the natriuretic peptide responsible for the regulation of sodium and water homeostasis in the kidney. In terms of biological role, may have a role in cardio-renal homeostasis through regulation of natriuresis and vasodilation. In vivo promotes natriuresis and in vitro, vasodilates renal artery strips. Functionally, may have a role in cardio-renal homeostasis through regulation of regulation of natriuresis and vasodilation. In vivo promotes natriuresis. In vitro, vasodilates intestinal smooth muscle but not smooth muscle strips. Its function is as follows. May have a role in cardio-renal homeostasis through regulation of natriuresis and vasodilation. In vivo promotes natriuresis. In vitro, selectively vasodilates intestinal and vascular smooth muscle strips. May have a role in cardio-renal homeostasis through regulation of natriuresis and vasodilation. In vivo promotes natriuresis. In vitro, selectively vasodilates intestinal smooth muscle but not vascular smooth muscle strips. The polypeptide is Natriuretic peptides A (NPPA) (Felis catus (Cat)).